The primary structure comprises 235 residues: Fibrillarin-like rRNA/tRNA 2'-O-methyltransferase (235 aa).

Residues Thr-91–Thr-92, Glu-110–Phe-111, Asp-137–Ala-138, and Asp-157–Gln-160 contribute to the S-adenosyl-L-methionine site.

This sequence belongs to the methyltransferase superfamily. Fibrillarin family. Interacts with nop5. Component of box C/D small ribonucleoprotein (sRNP) particles that contain rpl7ae, FlpA and nop5, plus a guide RNA.

In terms of biological role, involved in pre-rRNA and tRNA processing. Utilizes the methyl donor S-adenosyl-L-methionine to catalyze the site-specific 2'-hydroxyl methylation of ribose moieties in rRNA and tRNA. Site specificity is provided by a guide RNA that base pairs with the substrate. Methylation occurs at a characteristic distance from the sequence involved in base pairing with the guide RNA. In Pyrobaculum aerophilum (strain ATCC 51768 / DSM 7523 / JCM 9630 / CIP 104966 / NBRC 100827 / IM2), this protein is Fibrillarin-like rRNA/tRNA 2'-O-methyltransferase.